A 188-amino-acid polypeptide reads, in one-letter code: Acireductone dioxygenase (188 aa).

Fe(2+) contacts are provided by H97, H99, E103, and H141. Ni(2+)-binding residues include H97, H99, E103, and H141.

This sequence belongs to the acireductone dioxygenase (ARD) family. Monomer. Fe(2+) serves as cofactor. It depends on Ni(2+) as a cofactor.

It catalyses the reaction 1,2-dihydroxy-5-(methylsulfanyl)pent-1-en-3-one + O2 = 3-(methylsulfanyl)propanoate + CO + formate + 2 H(+). It carries out the reaction 1,2-dihydroxy-5-(methylsulfanyl)pent-1-en-3-one + O2 = 4-methylsulfanyl-2-oxobutanoate + formate + 2 H(+). It functions in the pathway amino-acid biosynthesis; L-methionine biosynthesis via salvage pathway; L-methionine from S-methyl-5-thio-alpha-D-ribose 1-phosphate: step 5/6. Functionally, catalyzes 2 different reactions between oxygen and the acireductone 1,2-dihydroxy-3-keto-5-methylthiopentene (DHK-MTPene) depending upon the metal bound in the active site. Fe-containing acireductone dioxygenase (Fe-ARD) produces formate and 2-keto-4-methylthiobutyrate (KMTB), the alpha-ketoacid precursor of methionine in the methionine recycle pathway. Ni-containing acireductone dioxygenase (Ni-ARD) produces methylthiopropionate, carbon monoxide and formate, and does not lie on the methionine recycle pathway. In Xanthomonas euvesicatoria pv. vesicatoria (strain 85-10) (Xanthomonas campestris pv. vesicatoria), this protein is Acireductone dioxygenase.